Reading from the N-terminus, the 144-residue chain is Endoribonuclease YbeY (144 aa).

Zn(2+) is bound by residues H104, H108, and H114.

Belongs to the endoribonuclease YbeY family. Requires Zn(2+) as cofactor.

The protein localises to the cytoplasm. Single strand-specific metallo-endoribonuclease involved in late-stage 70S ribosome quality control and in maturation of the 3' terminus of the 16S rRNA. The protein is Endoribonuclease YbeY of Nitratiruptor sp. (strain SB155-2).